Reading from the N-terminus, the 186-residue chain is Folate transporter FolT (186 aa).

Transmembrane regions (helical) follow at residues Val-16–Ile-36, Ile-47–Ile-67, Phe-81–Tyr-101, Val-116–Val-136, and Trp-153–Leu-173.

In terms of assembly, forms a stable energy-coupling factor (ECF) transporter complex composed of a membrane-embedded substrate-binding protein (S component), two ATP-binding proteins (A components) and a transmembrane protein (T component).

The protein resides in the cell membrane. Folate-binding protein that interacts with the energy-coupling factor (ECF) ABC-transporter complex. Unlike classic ABC transporters this ECF transporter provides the energy necessary to transport a number of different substrates. The substrates themselves are bound by transmembrane, not extracytoplasmic soluble proteins. This is Folate transporter FolT (folT) from Streptococcus mutans serotype c (strain ATCC 700610 / UA159).